We begin with the raw amino-acid sequence, 896 residues long: Translation initiation factor IF-2 (896 aa).

The tract at residues 46-315 (LAHLNRQHGG…FNKPAQPVER (270 aa)) is disordered. Residues 99–247 (SASEEQEREE…RKQQEKEDVH (149 aa)) are compositionally biased toward basic and acidic residues. Positions 269–278 (SRKRGKKRRR) are enriched in basic residues. A compositionally biased stretch (basic and acidic residues) spans 279–288 (KDEESDDTPR). The tr-type G domain maps to 396–565 (PRAPVVTVMG…LLQSEVLDLR (170 aa)). The G1 stretch occupies residues 405 to 412 (GHVDHGKT). 405–412 (GHVDHGKT) lines the GTP pocket. The interval 430-434 (GITQH) is G2. The interval 451-454 (DTPG) is G3. Residues 451–455 (DTPGH) and 505–508 (NKMD) each bind GTP. A G4 region spans residues 505-508 (NKMD). The G5 stretch occupies residues 541–543 (SAH).

It belongs to the TRAFAC class translation factor GTPase superfamily. Classic translation factor GTPase family. IF-2 subfamily.

It is found in the cytoplasm. Functionally, one of the essential components for the initiation of protein synthesis. Protects formylmethionyl-tRNA from spontaneous hydrolysis and promotes its binding to the 30S ribosomal subunits. Also involved in the hydrolysis of GTP during the formation of the 70S ribosomal complex. This Idiomarina loihiensis (strain ATCC BAA-735 / DSM 15497 / L2-TR) protein is Translation initiation factor IF-2.